An 80-amino-acid chain; its full sequence is Large ribosomal subunit protein uL24 (80 aa).

The disordered stretch occupies residues 53–80; it reads HMRPTQSNPQGSIIEREFPIHASNVKKS.

The protein belongs to the universal ribosomal protein uL24 family. As to quaternary structure, part of the 50S ribosomal subunit.

One of two assembly initiator proteins, it binds directly to the 5'-end of the 23S rRNA, where it nucleates assembly of the 50S subunit. In terms of biological role, one of the proteins that surrounds the polypeptide exit tunnel on the outside of the subunit. This Chlorobium luteolum (strain DSM 273 / BCRC 81028 / 2530) (Pelodictyon luteolum) protein is Large ribosomal subunit protein uL24.